The sequence spans 749 residues: Adenosylcobalamin-dependent ribonucleoside-triphosphate reductase (749 aa).

A disulfide bridge links Cys124 with Cys427. The effector region-1 stretch occupies residues 152 to 163; that stretch reads SMPFSFMFDQLM. An effector region-2 region spans residues 173-321; sequence TPNNVHQMPV…MGNMIGKTVV (149 aa). Active-site residues include Cys416 and Glu418. Residues 573–634 are adenosylcobalamin-binding-1; sequence FHYARYLIQR…EPAFASAGEV (62 aa). The adenosylcobalamin-binding-2 stretch occupies residues 693–734; the sequence is FKQAPKEPIDAATYDAKCQEITADVAEKFAAMTGNHDQKDIE.

Belongs to the class II ribonucleoside-triphosphate reductase family. In terms of assembly, monomer. It depends on adenosylcob(III)alamin as a cofactor.

It catalyses the reaction a 2'-deoxyribonucleoside 5'-triphosphate + [thioredoxin]-disulfide + H2O = a ribonucleoside 5'-triphosphate + [thioredoxin]-dithiol. Its activity is regulated as follows. Allosterically regulated by ATP and dNTP. This is Adenosylcobalamin-dependent ribonucleoside-triphosphate reductase (rtpR) from Levilactobacillus brevis (strain ATCC 367 / BCRC 12310 / CIP 105137 / JCM 1170 / LMG 11437 / NCIMB 947 / NCTC 947) (Lactobacillus brevis).